A 213-amino-acid chain; its full sequence is Elongation factor 1-beta (213 aa).

Residues A67 to A80 show a composition bias toward low complexity. Residues A67–D88 form a disordered region.

This sequence belongs to the EF-1-beta/EF-1-delta family. In terms of assembly, EF-1 is composed of 4 subunits: alpha, beta, delta, and gamma.

Functionally, EF-1-beta and EF-1-delta stimulate the exchange of GDP bound to EF-1-alpha to GTP. The polypeptide is Elongation factor 1-beta (EFB1) (Candida albicans (strain WO-1) (Yeast)).